Here is a 120-residue protein sequence, read N- to C-terminus: Ribonuclease P protein component (120 aa).

It belongs to the RnpA family. In terms of assembly, consists of a catalytic RNA component (M1 or rnpB) and a protein subunit.

The enzyme catalyses Endonucleolytic cleavage of RNA, removing 5'-extranucleotides from tRNA precursor.. In terms of biological role, RNaseP catalyzes the removal of the 5'-leader sequence from pre-tRNA to produce the mature 5'-terminus. It can also cleave other RNA substrates such as 4.5S RNA. The protein component plays an auxiliary but essential role in vivo by binding to the 5'-leader sequence and broadening the substrate specificity of the ribozyme. The sequence is that of Ribonuclease P protein component from Chlamydia trachomatis serovar L2 (strain ATCC VR-902B / DSM 19102 / 434/Bu).